A 511-amino-acid chain; its full sequence is GMP synthase [glutamine-hydrolyzing] (511 aa).

A Glutamine amidotransferase type-1 domain is found at 3 to 198 (SVLVLDFGSQ…LLNIAAITPD (196 aa)). Cys-80 (nucleophile) is an active-site residue. Catalysis depends on residues His-172 and Glu-174. The 188-residue stretch at 199 to 386 (WSSKSFIEHQ…LGIPEDILMR (188 aa)) folds into the GMPS ATP-PPase domain. 226-232 (SGGVDST) lines the ATP pocket.

In terms of assembly, homodimer.

It catalyses the reaction XMP + L-glutamine + ATP + H2O = GMP + L-glutamate + AMP + diphosphate + 2 H(+). Its pathway is purine metabolism; GMP biosynthesis; GMP from XMP (L-Gln route): step 1/1. In terms of biological role, catalyzes the synthesis of GMP from XMP. The sequence is that of GMP synthase [glutamine-hydrolyzing] from Chlorobium chlorochromatii (strain CaD3).